The sequence spans 427 residues: BSD domain-containing protein 1 (427 aa).

A phosphoserine mark is found at Ser-92 and Ser-166. One can recognise a BSD domain in the interval 146-198; sequence WLSEFCLEEKKGEISELLVGSPSIRALYTKMVPAAVSHSEFWHRYFYKVHQLE. The disordered stretch occupies residues 208-397; sequence KQRADQSISE…ISEDWEKDFD (190 aa). Residues 219 to 229 are compositionally biased toward acidic residues; it reads PGWEEEEEELE. Basic and acidic residues predominate over residues 236-245; it reads KEAKIPKETK. Positions 268 to 279 are enriched in low complexity; sequence PAEATPSESSES. Pro residues predominate over residues 324-333; the sequence is GPPPPPPSKP. Residues 347 to 364 are compositionally biased toward basic and acidic residues; sequence PPARVETLREEVPTDLRV. A Phosphothreonine modification is found at Thr-353. Residues 368 to 387 are compositionally biased toward polar residues; it reads NSDSGKSTPSNNGKKGSSTD. Phosphoserine is present on residues Ser-384 and Ser-385. The segment covering 388 to 397 has biased composition (acidic residues); the sequence is ISEDWEKDFD. Phosphoserine is present on Ser-415.

The sequence is that of BSD domain-containing protein 1 (Bsdc1) from Mus musculus (Mouse).